A 197-amino-acid chain; its full sequence is Histone chaperone asf1b-B (197 aa).

The protein belongs to the ASF1 family. In terms of assembly, interacts with histone H3 and histone H4.

The protein resides in the nucleus. In terms of biological role, histone chaperone that facilitates histone deposition and histone exchange and removal during nucleosome assembly and disassembly. The chain is Histone chaperone asf1b-B (asf1bb) from Danio rerio (Zebrafish).